Reading from the N-terminus, the 218-residue chain is Probable transaldolase (218 aa).

The Schiff-base intermediate with substrate role is filled by Lys83.

The protein belongs to the transaldolase family. Type 3B subfamily.

Its subcellular location is the cytoplasm. It catalyses the reaction D-sedoheptulose 7-phosphate + D-glyceraldehyde 3-phosphate = D-erythrose 4-phosphate + beta-D-fructose 6-phosphate. Its pathway is carbohydrate degradation; pentose phosphate pathway; D-glyceraldehyde 3-phosphate and beta-D-fructose 6-phosphate from D-ribose 5-phosphate and D-xylulose 5-phosphate (non-oxidative stage): step 2/3. In terms of biological role, transaldolase is important for the balance of metabolites in the pentose-phosphate pathway. The sequence is that of Probable transaldolase from Kosmotoga olearia (strain ATCC BAA-1733 / DSM 21960 / TBF 19.5.1).